The chain runs to 394 residues: NAD(P)H-quinone oxidoreductase subunit H (394 aa).

Belongs to the complex I 49 kDa subunit family. As to quaternary structure, NDH-1 can be composed of about 15 different subunits; different subcomplexes with different compositions have been identified which probably have different functions.

The protein localises to the cellular thylakoid membrane. The catalysed reaction is a plastoquinone + NADH + (n+1) H(+)(in) = a plastoquinol + NAD(+) + n H(+)(out). The enzyme catalyses a plastoquinone + NADPH + (n+1) H(+)(in) = a plastoquinol + NADP(+) + n H(+)(out). Functionally, NDH-1 shuttles electrons from an unknown electron donor, via FMN and iron-sulfur (Fe-S) centers, to quinones in the respiratory and/or the photosynthetic chain. The immediate electron acceptor for the enzyme in this species is believed to be plastoquinone. Couples the redox reaction to proton translocation, and thus conserves the redox energy in a proton gradient. Cyanobacterial NDH-1 also plays a role in inorganic carbon-concentration. The chain is NAD(P)H-quinone oxidoreductase subunit H from Trichodesmium erythraeum (strain IMS101).